The following is a 1056-amino-acid chain: PH and SEC7 domain-containing protein 4 (1056 aa).

Basic and acidic residues predominate over residues 25–42 (LEPHPGECPRETCSHEDP). 6 disordered regions span residues 25–71 (LEPH…SGVE), 87–149 (CQEQ…QNRS), 195–239 (LPGD…QWGA), 340–362 (GAPA…APSA), 388–533 (VQPW…GDVQ), and 546–581 (LRTP…LANG). Polar residues-rich tracts occupy residues 88–99 (QEQTRATDPPES) and 128–137 (NTASPGSPVN). Residues Ser131, Ser134, and Ser143 each carry the phosphoserine modification. Over residues 207–220 (ENEDSGEDSSEPEG) the composition is skewed to acidic residues. The residue at position 413 (Ser413) is a Phosphoserine. A compositionally biased stretch (basic and acidic residues) spans 414-423 (QDRDEREGGH). Residues 438 to 456 (RSPASSPEPSSPESESRGP) are compositionally biased toward low complexity. Phosphoserine occurs at positions 448, 469, and 491. Composition is skewed to polar residues over residues 466–476 (QEGSPQLQHHS) and 486–502 (DASQ…QPSS). Positions 504 to 522 (KKKEAGEAPKPGEEVKSEG) are enriched in basic and acidic residues. An SEC7 domain is found at 544–736 (ENLRTPMNSS…KALYWSIRSE (193 aa)). Over residues 548–567 (TPMNSSWLPGSPMPQAQSPE) the composition is skewed to polar residues. Residues 776-892 (PTYKQGILAR…WIARINLAAA (117 aa)) form the PH domain. A coiled-coil region spans residues 921-976 (SSLEEQHRSHENCLDAAADDLLDLQRNLPERRGRGRELEEHRLRKEYLEYEKTRYE). The interval 1004 to 1056 (AGGTREPKLSLKKSHSSPSLHQDEAPTTAKVKRNISERRTYRKIIPKRNRNQL) is disordered. 2 positions are modified to phosphoserine: Ser1019 and Ser1022. Basic residues predominate over residues 1043 to 1056 (TYRKIIPKRNRNQL).

As to expression, widely expressed. Highest levels of expression are found in placenta, pancreas, spleen, thymus and peripheral blood.

The protein resides in the cell membrane. Its subcellular location is the cell projection. The protein localises to the ruffle membrane. Functionally, guanine nucleotide exchange factor for ARF6 and ARL14/ARF7. Through ARL14 activation, controls the movement of MHC class II-containing vesicles along the actin cytoskeleton in dendritic cells. Involved in membrane recycling. Interacts with several phosphatidylinositol phosphate species, including phosphatidylinositol 3,4-bisphosphate, phosphatidylinositol 3,5-bisphosphate and phosphatidylinositol 4,5-bisphosphate. The sequence is that of PH and SEC7 domain-containing protein 4 (PSD4) from Homo sapiens (Human).